We begin with the raw amino-acid sequence, 88 residues long: Large ribosomal subunit protein bL27 (88 aa).

Residues 1–22 (MAQKKAGGSSRNGRDSAGRRLG) form a disordered region.

It belongs to the bacterial ribosomal protein bL27 family.

This Gluconobacter oxydans (strain 621H) (Gluconobacter suboxydans) protein is Large ribosomal subunit protein bL27.